The following is a 318-amino-acid chain: 2-keto-3-deoxygluconate permease (318 aa).

Helical transmembrane passes span 10 to 30 (LPGGMMLVPLLLGAVCHTLWP), 42 to 62 (GLISGTVPILAVWFFCMGATI), 82 to 102 (IAMAWLVAVLCAPLLPIGGVP), 109 to 129 (LSVLALVAAMDMTNGGLYAAL), 139 to 159 (AGAVVLMSLESGPLISMLILG), 163 to 183 (LASFDPLLFVGAVLPLLLGFA), 194 to 214 (FFAQATTTLVPFFGFALGNTL), 224 to 244 (ASGVLLGVAVIVITGLPLLLA), 257 to 277 (VAASSTAGAAVATPALIAGMA), and 289 to 309 (ALVASAVIVTSLLVPLLTALY).

This sequence belongs to the KdgT transporter family.

The protein localises to the cell inner membrane. It catalyses the reaction 2-dehydro-3-deoxy-D-gluconate(in) + H(+)(in) = 2-dehydro-3-deoxy-D-gluconate(out) + H(+)(out). Functionally, catalyzes the proton-dependent uptake of 2-keto-3-deoxygluconate (KDG) into the cell. This is 2-keto-3-deoxygluconate permease from Xanthomonas euvesicatoria pv. vesicatoria (strain 85-10) (Xanthomonas campestris pv. vesicatoria).